The primary structure comprises 362 residues: MEHNGSASNAGKIHQNRLSSVTEDEDQDAALTIVTVLDRVASVVDSVQASQKRIEERHREMGNAIKSVQIDLLKLSQSHSNTGYVVNKLFEKTRKVSAHIKDVKARVEKQQVRVTKVETKQEEIMKKNKFRVVIFQEDIPCPASLSVVKDRSLPENQEEAEEVFDPPIELSSDEEYYVEESRSARLRKSGKEHIDHIKKAFSRENMQKTRQTLDKKVSGIRTRIVTPERRERLRQSGERLRQSGERLRQSGERFKKSISSAAPSKEAFKIRSLRKAKDPKAEGQEVDRGMGVDIISGSLALGPIHEFHSDEFSETEKEVTKGGYSPQEGGDPPTPEPLKVTFKPQVRVEDDESLLLELKQSS.

The segment at 1 to 24 (MEHNGSASNAGKIHQNRLSSVTED) is disordered. Positions 100–120 (IKDVKARVEKQQVRVTKVETK) form a coiled coil. Phosphoserine is present on residues S152, S171, and S172. Basic and acidic residues-rich tracts occupy residues 230–255 (RERL…ERFK), 275–289 (KAKD…VDRG), and 305–320 (HEFH…KEVT). Disordered stretches follow at residues 230–289 (RERL…VDRG) and 305–346 (HEFH…KPQV). Y324 is modified (phosphotyrosine). T334 bears the Phosphothreonine mark. A Phosphoserine modification is found at S353.

Belongs to the CAVIN family. As to quaternary structure, component of the CAVIN complex composed of CAVIN1, CAVIN2, CAVIN3 and CAVIN4. Interacts with CAVIN1. Interacts with CAVIN2; this augments the transactivation of NPPA. Interacts with CAV3, ADRA1A, ADRA1B, MAPK1 and MAPK3. Abundantly expressed in cardiac and skeletal muscle (at protein level). Weaker expression in aorta and lung. In heart, expressed in cardiomyocytes and vascular smooth muscle cells but not in other surrounding cells including vascular endothelial cells.

It is found in the cytoplasm. The protein localises to the myofibril. Its subcellular location is the sarcomere. The protein resides in the cytosol. It localises to the membrane. It is found in the caveola. The protein localises to the cell membrane. Its subcellular location is the sarcolemma. Modulates the morphology of formed caveolae in cardiomyocytes, but is not required for caveolar formation. Facilitates the recruitment of MAPK1/3 to caveolae within cardiomyocytes and regulates alpha-1 adrenergic receptor-induced hypertrophic responses in cardiomyocytes through MAPK1/3 activation. Contributes to proper membrane localization and stabilization of caveolin-3 (CAV3) in cardiomyocytes. Induces RHOA activation and activates NPPA transcription and myofibrillar organization through the Rho/ROCK signaling pathway. This Mus musculus (Mouse) protein is Caveolae-associated protein 4 (Cavin4).